The primary structure comprises 332 residues: Protein pelota homolog (332 aa).

This sequence belongs to the eukaryotic release factor 1 family. Pelota subfamily. In terms of assembly, monomer. Requires a divalent metal cation as cofactor.

The protein localises to the cytoplasm. May function in recognizing stalled ribosomes, interact with stem-loop structures in stalled mRNA molecules, and effect endonucleolytic cleavage of the mRNA. May play a role in the release non-functional ribosomes and degradation of damaged mRNAs. Has endoribonuclease activity. This is Protein pelota homolog from Pyrobaculum calidifontis (strain DSM 21063 / JCM 11548 / VA1).